The sequence spans 91 residues: Cell division topological specificity factor (91 aa).

This sequence belongs to the MinE family.

Its function is as follows. Prevents the cell division inhibition by proteins MinC and MinD at internal division sites while permitting inhibition at polar sites. This ensures cell division at the proper site by restricting the formation of a division septum at the midpoint of the long axis of the cell. This Chloroflexus aggregans (strain MD-66 / DSM 9485) protein is Cell division topological specificity factor.